A 582-amino-acid polypeptide reads, in one-letter code: ATP-dependent lipid A-core flippase (582 aa).

5 helical membrane passes run 26-46 (LIAA…LIYL), 68-88 (ILVM…SYCL), 140-160 (YVLV…AVMV), 164-184 (WQLS…ISIV), and 252-272 (GLVQ…ATFP). Residues 27-310 (IAASVALILN…LTSVNSQFQR (284 aa)) enclose the ABC transmembrane type-1 domain. Positions 342-578 (ITFDNVIFSY…GGAYKQLYSM (237 aa)) constitute an ABC transporter domain. Residue 376–383 (GRSGSGKS) coordinates ATP.

This sequence belongs to the ABC transporter superfamily. Lipid exporter (TC 3.A.1.106) family. As to quaternary structure, homodimer.

The protein localises to the cell inner membrane. The enzyme catalyses ATP + H2O + lipid A-core oligosaccharideSide 1 = ADP + phosphate + lipid A-core oligosaccharideSide 2.. Involved in lipopolysaccharide (LPS) biosynthesis. Translocates lipid A-core from the inner to the outer leaflet of the inner membrane. Transmembrane domains (TMD) form a pore in the inner membrane and the ATP-binding domain (NBD) is responsible for energy generation. In Haemophilus ducreyi (strain 35000HP / ATCC 700724), this protein is ATP-dependent lipid A-core flippase.